A 94-amino-acid chain; its full sequence is Aspartyl/glutamyl-tRNA(Asn/Gln) amidotransferase subunit C (94 aa).

The tract at residues 72-94 (PREKALQGAPEVSEGQFKVPRVV) is disordered.

The protein belongs to the GatC family. As to quaternary structure, heterotrimer of A, B and C subunits.

It catalyses the reaction L-glutamyl-tRNA(Gln) + L-glutamine + ATP + H2O = L-glutaminyl-tRNA(Gln) + L-glutamate + ADP + phosphate + H(+). The enzyme catalyses L-aspartyl-tRNA(Asn) + L-glutamine + ATP + H2O = L-asparaginyl-tRNA(Asn) + L-glutamate + ADP + phosphate + 2 H(+). Functionally, allows the formation of correctly charged Asn-tRNA(Asn) or Gln-tRNA(Gln) through the transamidation of misacylated Asp-tRNA(Asn) or Glu-tRNA(Gln) in organisms which lack either or both of asparaginyl-tRNA or glutaminyl-tRNA synthetases. The reaction takes place in the presence of glutamine and ATP through an activated phospho-Asp-tRNA(Asn) or phospho-Glu-tRNA(Gln). The sequence is that of Aspartyl/glutamyl-tRNA(Asn/Gln) amidotransferase subunit C from Moorella thermoacetica (strain ATCC 39073 / JCM 9320).